The following is a 210-amino-acid chain: Orotate phosphoribosyltransferase (210 aa).

5-phospho-alpha-D-ribose 1-diphosphate is bound by residues arginine 97, lysine 101, histidine 103, and 123-131; that span reads EDLISTGGS. Residue serine 127 coordinates orotate.

This sequence belongs to the purine/pyrimidine phosphoribosyltransferase family. PyrE subfamily. Homodimer. It depends on Mg(2+) as a cofactor.

It carries out the reaction orotidine 5'-phosphate + diphosphate = orotate + 5-phospho-alpha-D-ribose 1-diphosphate. The protein operates within pyrimidine metabolism; UMP biosynthesis via de novo pathway; UMP from orotate: step 1/2. Catalyzes the transfer of a ribosyl phosphate group from 5-phosphoribose 1-diphosphate to orotate, leading to the formation of orotidine monophosphate (OMP). This Enterococcus faecalis (strain ATCC 700802 / V583) protein is Orotate phosphoribosyltransferase.